Consider the following 314-residue polypeptide: 2,3-dihydroxyphenylpropionate/2,3-dihydroxicinnamic acid 1,2-dioxygenase (314 aa).

The active-site Proton donor is the histidine 115. Histidine 179 acts as the Proton acceptor in catalysis.

The protein belongs to the LigB/MhpB extradiol dioxygenase family. As to quaternary structure, homotetramer. Fe(2+) serves as cofactor.

The enzyme catalyses 3-(2,3-dihydroxyphenyl)propanoate + O2 = (2Z,4E)-2-hydroxy-6-oxonona-2,4-dienedioate + H(+). It carries out the reaction (2E)-3-(2,3-dihydroxyphenyl)prop-2-enoate + O2 = (2Z,4E,7E)-2-hydroxy-6-oxonona-2,4,7-trienedioate + H(+). Its pathway is aromatic compound metabolism; 3-phenylpropanoate degradation. Catalyzes the non-heme iron(II)-dependent oxidative cleavage of 2,3-dihydroxyphenylpropionic acid and 2,3-dihydroxicinnamic acid into 2-hydroxy-6-ketononadienedioate and 2-hydroxy-6-ketononatrienedioate, respectively. This chain is 2,3-dihydroxyphenylpropionate/2,3-dihydroxicinnamic acid 1,2-dioxygenase, found in Rhodococcus globerulus.